A 418-amino-acid polypeptide reads, in one-letter code: Tyrosine--tRNA ligase (418 aa).

Residue Tyr34 coordinates L-tyrosine. A 'HIGH' region motif is present at residues 39–48 (PTADSLHLGH). L-tyrosine-binding residues include Tyr169 and Gln173. The 'KMSKS' region signature appears at 229 to 233 (KFGKS). Position 232 (Lys232) interacts with ATP. Residues 352-418 (LNIVDLLVTA…GKKKYFVLTY (67 aa)) form the S4 RNA-binding domain.

It belongs to the class-I aminoacyl-tRNA synthetase family. TyrS type 1 subfamily. In terms of assembly, homodimer.

It is found in the cytoplasm. It carries out the reaction tRNA(Tyr) + L-tyrosine + ATP = L-tyrosyl-tRNA(Tyr) + AMP + diphosphate + H(+). Functionally, catalyzes the attachment of tyrosine to tRNA(Tyr) in a two-step reaction: tyrosine is first activated by ATP to form Tyr-AMP and then transferred to the acceptor end of tRNA(Tyr). The chain is Tyrosine--tRNA ligase from Streptococcus gordonii (strain Challis / ATCC 35105 / BCRC 15272 / CH1 / DL1 / V288).